The chain runs to 628 residues: (-)-beta-pinene synthase 1, chloroplastic (628 aa).

The transit peptide at 1-51 (MDLISVLPSASKSCVCLHKPLSSSTHKLKPFCRTIRILGMPRPRKSVLMVS) directs the protein to the chloroplast. 3 residues coordinate Mg(2+): D379, D383, and D531. Residues 379 to 383 (DDMYD) carry the DDXXD motif motif.

Belongs to the terpene synthase family. Tpsd subfamily. It depends on Mg(2+) as a cofactor. Requires Mn(2+) as cofactor.

The protein localises to the plastid. The protein resides in the chloroplast. The catalysed reaction is (2E)-geranyl diphosphate = (1S,5S)-beta-pinene + diphosphate. It carries out the reaction (2E)-geranyl diphosphate = (1S,5S)-alpha-pinene + diphosphate. The protein operates within terpene metabolism; oleoresin biosynthesis. It participates in secondary metabolite biosynthesis; terpenoid biosynthesis. Functionally, monoterpene synthase (TPS) involved in the biosynthesis of monoterpene natural products included in conifer oleoresin secretions and volatile emissions; these compounds contribute to biotic and abiotic stress defense against herbivores and pathogens. Catalyzes the conversion of (2E)-geranyl diphosphate (GPP) to (-)-beta-pinene and, to a lower extent, to (-)-alpha-pinene. This Pinus banksiana (Jack pine) protein is (-)-beta-pinene synthase 1, chloroplastic.